A 1408-amino-acid chain; its full sequence is MMISRGLFGWSPPHMQPLTPVSEVSEPPESPSPYLDPGAESGGGTGTAAALAEADEEMDDQDELEPPPAAVPFSQLFACADRFDWVLMIVGSVAAAAHGTALIVYLHYFAKIVDVLAFSNDSSQQRSEHQFDRLVQLSLTIVYIAGGVFISGWIEVSCWILTGERQTAVIRSKYVQVLLNQDMSFFDTYGNNGDIVSQVLSDVLLIQSALSEKVGNYIHNMATFISGLVIGFVNCWEIALITLATGPFIVAAGGISNIFLHRLAENIQDAYAEAAGIAEQAISYIRTLYAFTNETLAKYSYATSLQATLRYGILISLVQGLGLGFTYGLAICSCALQLWIGRFFVHNGRANGGEIIAALFAVILSGLGLNQAATNFYSFDQGRIAAYRLFEMITRSSSVANQEGAVLASVQGNIEFRNVYFSYLSRPEIPILSGFYLTVPAKKAVALVGRNGSGKSSIIPLMERFYDPTLGEVLLDGENIKNLKLEWLRSQIGLVTQEPALLSLSIRENIAYGRDATLDQIEEAAKNAHAHTFISSLEKGYETQVGRAGLAMTEEQKIKLSIARAVLLNPTILLLDEVTGGLDFEAERIVQEALDLLMLGRSTIIIARRLSLIKNADYIAVMEEGQLVEMGTHDELINLGGLYAELLKCEEATKLPRRMPVRNYKESAVFEVERDSSAGCGVQEPSSPKMIKSPSLQRGSGVFRPQELCFDTEESPKAHSPASEKTGEDGMSLDCADKEPTIKRQDSFEMRLPHLPKVDVQCPQQKSNGSEPESPVSPLLTSDPKNERSHSQTFSRPLSSPDDTKANGKASKDAQHKESPSFWRLAQLSFPEWLYAVLGSLGAAIFGSFNPLLAYVIALVVTEYYKSKGGHLREEVDKWCLIIACMGIVTVVANFLQHFYFGIMGEKMTERVRRMMFSAMLRNEVGWFDDEENSPDTLSMRLANDATFVRAAFSNRLSIFIQDSFAVIVALLIGLLLGWRLALVALATLPILTLSAIAQKLWLAGFSKGIQEMHRKASLVLEDAVRNIYTVVAFCAGNKVMELYRMQLQRILRQSYLHGMAIGFAFGFSQFLLFACNALLLWCTALSVNRGYMKLSTAITEYMVFSFATFALVEPFGLAPYILKRRKSLISVFEIVDRVPTIEPDDNSALKPPNVYGSIELKNVDFCYPTRPEILVLSNFSLKISGGQTVAVVGVSGSGKSTIISLVERYYDPVAGQVLLDGRDLKLYNLRWLRSHMGLVQQEPIIFSTTIRENIIYARHNASEAEMKEAARIANAHHFISSLPHGYDTHIGMRGVELTPGQKQRIAIARVVLKNAPIILIDEASSSIESESSRVVQEALDTLIMGNKTTILIAHRAAMMRHVDNIVVLNGGRIVEEGTHDSLAAKNGLYVRLMQPHFGKGLRQHRLI.

The segment at 14 to 49 (HMQPLTPVSEVSEPPESPSPYLDPGAESGGGTGTAA) is disordered. Over residues 20-39 (PVSEVSEPPESPSPYLDPGA) the composition is skewed to low complexity. A helical transmembrane segment spans residues 86–106 (VLMIVGSVAAAAHGTALIVYL). An ABC transmembrane type-1 1 domain is found at 88 to 381 (MIVGSVAAAA…AATNFYSFDQ (294 aa)). Residue asparagine 120 is glycosylated (N-linked (GlcNAc...) asparagine). 3 consecutive transmembrane segments (helical) span residues 141-161 (IVYIAGGVFISGWIEVSCWIL), 214-233 (VGNYIHNMATFISGLVIGFV), and 238-260 (IALITLATGPFIVAAGGISNIFL). Asparagine 293 is a glycosylation site (N-linked (GlcNAc...) asparagine). The next 2 membrane-spanning stretches (helical) occupy residues 312–332 (GILISLVQGLGLGFTYGLAIC) and 353–373 (GEIIAALFAVILSGLGLNQAA). The region spanning 414-649 (IEFRNVYFSY…GGLYAELLKC (236 aa)) is the ABC transporter 1 domain. 449-456 (GRNGSGKS) is an ATP binding site. Residue asparagine 451 is glycosylated (N-linked (GlcNAc...) asparagine). 2 disordered regions span residues 676–735 (SSAG…SLDC) and 752–816 (LPHL…DAQH). Over residues 762–771 (CPQQKSNGSE) the composition is skewed to polar residues. An N-linked (GlcNAc...) asparagine glycan is attached at asparagine 768. Basic and acidic residues predominate over residues 802–816 (DDTKANGKASKDAQH). The region spanning 836–1124 (AVLGSLGAAI…PFGLAPYILK (289 aa)) is the ABC transmembrane type-1 2 domain. The next 6 helical transmembrane spans lie at 841-861 (LGAAIFGSFNPLLAYVIALVV), 881-901 (LIIACMGIVTVVANFLQHFYF), 959-979 (IFIQDSFAVIVALLIGLLLGW), 983-1003 (LVALATLPILTLSAIAQKLWL), 1062-1082 (IGFAFGFSQFLLFACNALLLW), and 1103-1123 (MVFSFATFALVEPFGLAPYIL). Positions 1159–1396 (IELKNVDFCY…NGLYVRLMQP (238 aa)) constitute an ABC transporter 2 domain. Residue asparagine 1179 is glycosylated (N-linked (GlcNAc...) asparagine). 1194–1201 (GVSGSGKS) provides a ligand contact to ATP. 2 N-linked (GlcNAc...) asparagine glycosylation sites follow: asparagine 1261 and asparagine 1347.

The protein belongs to the ABC transporter superfamily. ABCB family. Multidrug resistance exporter (TC 3.A.1.201) subfamily. As to expression, expressed in aerial tissues.

The protein localises to the membrane. The catalysed reaction is (indol-3-yl)acetate(in) + ATP + H2O = (indol-3-yl)acetate(out) + ADP + phosphate + H(+). Functionally, probable auxin efflux transporter that contributes, together with ABCB6 and in a FKBP42/TWD1-dependent manner, to the regulation of leaf position and morphology, internode distribution, roots development, and inflorescence organization, probably by modulating auxin repartition. The polypeptide is ABC transporter B family member 20 (Arabidopsis thaliana (Mouse-ear cress)).